A 358-amino-acid polypeptide reads, in one-letter code: UDP-N-acetylglucosamine--N-acetylmuramyl-(pentapeptide) pyrophosphoryl-undecaprenol N-acetylglucosamine transferase (358 aa).

Residues 13–15, Asn125, Arg161, Ser189, Ile244, and Gln288 contribute to the UDP-N-acetyl-alpha-D-glucosamine site; that span reads TGG.

It belongs to the glycosyltransferase 28 family. MurG subfamily.

Its subcellular location is the cell membrane. The catalysed reaction is di-trans,octa-cis-undecaprenyl diphospho-N-acetyl-alpha-D-muramoyl-L-alanyl-D-glutamyl-meso-2,6-diaminopimeloyl-D-alanyl-D-alanine + UDP-N-acetyl-alpha-D-glucosamine = di-trans,octa-cis-undecaprenyl diphospho-[N-acetyl-alpha-D-glucosaminyl-(1-&gt;4)]-N-acetyl-alpha-D-muramoyl-L-alanyl-D-glutamyl-meso-2,6-diaminopimeloyl-D-alanyl-D-alanine + UDP + H(+). It participates in cell wall biogenesis; peptidoglycan biosynthesis. Cell wall formation. Catalyzes the transfer of a GlcNAc subunit on undecaprenyl-pyrophosphoryl-MurNAc-pentapeptide (lipid intermediate I) to form undecaprenyl-pyrophosphoryl-MurNAc-(pentapeptide)GlcNAc (lipid intermediate II). The polypeptide is UDP-N-acetylglucosamine--N-acetylmuramyl-(pentapeptide) pyrophosphoryl-undecaprenol N-acetylglucosamine transferase (Baumannia cicadellinicola subsp. Homalodisca coagulata).